We begin with the raw amino-acid sequence, 193 residues long: dTTP/UTP pyrophosphatase (193 aa).

The active-site Proton acceptor is D75.

It belongs to the Maf family. YhdE subfamily. A divalent metal cation is required as a cofactor.

Its subcellular location is the cytoplasm. The enzyme catalyses dTTP + H2O = dTMP + diphosphate + H(+). The catalysed reaction is UTP + H2O = UMP + diphosphate + H(+). In terms of biological role, nucleoside triphosphate pyrophosphatase that hydrolyzes dTTP and UTP. May have a dual role in cell division arrest and in preventing the incorporation of modified nucleotides into cellular nucleic acids. This chain is dTTP/UTP pyrophosphatase, found in Chlorobium phaeovibrioides (strain DSM 265 / 1930) (Prosthecochloris vibrioformis (strain DSM 265)).